The following is a 202-amino-acid chain: HTH-type transcriptional regulator BetI 1 (202 aa).

In terms of domain architecture, HTH tetR-type spans 8–68 (PIRRRQLIQA…SAMRQILWDL (61 aa)). Residues 31–50 (TIARIAKRAGVSAGIISHYF) constitute a DNA-binding region (H-T-H motif).

It functions in the pathway amine and polyamine biosynthesis; betaine biosynthesis via choline pathway [regulation]. In terms of biological role, repressor involved in the biosynthesis of the osmoprotectant glycine betaine. It represses transcription of the choline transporter BetT and the genes of BetAB involved in the synthesis of glycine betaine. The protein is HTH-type transcriptional regulator BetI 1 of Chromohalobacter salexigens (strain ATCC BAA-138 / DSM 3043 / CIP 106854 / NCIMB 13768 / 1H11).